We begin with the raw amino-acid sequence, 116 residues long: U16-barytoxin-Tl1c (116 aa).

A signal peptide spans 1–20 (MKTIIVFLSLLVLATKFGDA). Residues 21–76 (NEGVNQEQMKEVIQNEFREDFLNEMAPMSLLQQLEAIESTLLEKEADRNSRQKRCN) constitute a propeptide that is removed on maturation. Disulfide bonds link Cys75–Cys90, Cys82–Cys95, and Cys89–Cys110.

This sequence belongs to the neurotoxin 14 (magi-1) family. 06 (ICK-Trit) subfamily. In terms of tissue distribution, expressed by the venom gland.

It is found in the secreted. Ion channel inhibitor. The chain is U16-barytoxin-Tl1c from Trittame loki (Brush-footed trapdoor spider).